Reading from the N-terminus, the 477-residue chain is UDP-N-acetylmuramate--L-alanine ligase (477 aa).

122 to 128 serves as a coordination point for ATP; that stretch reads GTHGKTT.

The protein belongs to the MurCDEF family.

It is found in the cytoplasm. It catalyses the reaction UDP-N-acetyl-alpha-D-muramate + L-alanine + ATP = UDP-N-acetyl-alpha-D-muramoyl-L-alanine + ADP + phosphate + H(+). The protein operates within cell wall biogenesis; peptidoglycan biosynthesis. In terms of biological role, cell wall formation. This chain is UDP-N-acetylmuramate--L-alanine ligase, found in Xanthomonas axonopodis pv. citri (strain 306).